The primary structure comprises 441 residues: Glutamyl-tRNA reductase (441 aa).

Substrate contacts are provided by residues 58–61, S116, 121–123, and Q127; these read TCNR and EPD. Residue C59 is the Nucleophile of the active site. 195-200 contacts NADP(+); the sequence is GAGMAG.

It belongs to the glutamyl-tRNA reductase family. As to quaternary structure, homodimer.

It carries out the reaction (S)-4-amino-5-oxopentanoate + tRNA(Glu) + NADP(+) = L-glutamyl-tRNA(Glu) + NADPH + H(+). Its pathway is porphyrin-containing compound metabolism; protoporphyrin-IX biosynthesis; 5-aminolevulinate from L-glutamyl-tRNA(Glu): step 1/2. Catalyzes the NADPH-dependent reduction of glutamyl-tRNA(Glu) to glutamate 1-semialdehyde (GSA). In Ignicoccus hospitalis (strain KIN4/I / DSM 18386 / JCM 14125), this protein is Glutamyl-tRNA reductase.